The following is a 1703-amino-acid chain: Gingipain R1 (1703 aa).

A signal peptide spans 1–20; that stretch reads MNKFVSIALCSSLLGGMAFA. A propeptide spanning residues 21 to 224 is cleaved from the precursor; it reads QQTELGRNPN…RMFMNYEPGR (204 aa). Residues Asp-302, Val-324, Asp-327, Tyr-329, Glu-331, Glu-385, and His-390 each coordinate Ca(2+). His-435 acts as the Proton donor in catalysis. The active-site Nucleophile is Cys-468. Residues Phe-473, Glu-482, Asp-516, Glu-517, Glu-520, and His-526 each contribute to the Ca(2+) site. The segment at 940–968 is disordered; the sequence is WDAPNGTPNPNPNPNPNPNPGTTTLSESF. Pro residues predominate over residues 946 to 958; sequence TPNPNPNPNPNPN.

The protein belongs to the peptidase C25 family.

Its subcellular location is the secreted. It carries out the reaction Hydrolysis of proteins and small molecule substrates, with a preference for Arg in P1.. Thiol protease. Acts synergistically with RgpB to catalyze the maturation of fimbrial subunits, such as FimA. Its proteolytic activity is a major factor in both periodontal tissue destruction and in evasion of host defense mechanisms. In Porphyromonas gingivalis (strain ATCC 33277 / DSM 20709 / CIP 103683 / JCM 12257 / NCTC 11834 / 2561), this protein is Gingipain R1.